The following is a 614-amino-acid chain: tRNA uridine 5-carboxymethylaminomethyl modification enzyme MnmG (614 aa).

10–15 is a binding site for FAD; sequence GAGHAG. Residue 271 to 285 participates in NAD(+) binding; it reads GPRYCPSIEDKIVKF.

Belongs to the MnmG family. Homodimer. Heterotetramer of two MnmE and two MnmG subunits. FAD serves as cofactor.

Its subcellular location is the cytoplasm. In terms of biological role, NAD-binding protein involved in the addition of a carboxymethylaminomethyl (cmnm) group at the wobble position (U34) of certain tRNAs, forming tRNA-cmnm(5)s(2)U34. This is tRNA uridine 5-carboxymethylaminomethyl modification enzyme MnmG from Ureaplasma parvum serovar 3 (strain ATCC 27815 / 27 / NCTC 11736).